We begin with the raw amino-acid sequence, 466 residues long: Adenylosuccinate lyase (466 aa).

Substrate contacts are provided by residues 21-22, 97-99, and 130-131; these read RY, NHD, and TS. His180 serves as the catalytic Proton donor/acceptor. Substrate is bound at residue Gln259. Ser307 functions as the Proton donor/acceptor in the catalytic mechanism. Positions 347, 352, and 356 each coordinate substrate.

It belongs to the lyase 1 family. Adenylosuccinate lyase subfamily. As to quaternary structure, homotetramer. Residues from neighboring subunits contribute catalytic and substrate-binding residues to each active site.

It carries out the reaction N(6)-(1,2-dicarboxyethyl)-AMP = fumarate + AMP. It catalyses the reaction (2S)-2-[5-amino-1-(5-phospho-beta-D-ribosyl)imidazole-4-carboxamido]succinate = 5-amino-1-(5-phospho-beta-D-ribosyl)imidazole-4-carboxamide + fumarate. It functions in the pathway purine metabolism; AMP biosynthesis via de novo pathway; AMP from IMP: step 2/2. The protein operates within purine metabolism; IMP biosynthesis via de novo pathway; 5-amino-1-(5-phospho-D-ribosyl)imidazole-4-carboxamide from 5-amino-1-(5-phospho-D-ribosyl)imidazole-4-carboxylate: step 2/2. The sequence is that of Adenylosuccinate lyase (purB) from Dictyostelium discoideum (Social amoeba).